The primary structure comprises 639 residues: 1-deoxy-D-xylulose-5-phosphate synthase (639 aa).

Residues H79 and G120 to S122 each bind thiamine diphosphate. Mg(2+) is bound at residue D151. Residues G152–S153, N180, Y289, and E371 each bind thiamine diphosphate. N180 provides a ligand contact to Mg(2+).

It belongs to the transketolase family. DXPS subfamily. Homodimer. Mg(2+) serves as cofactor. It depends on thiamine diphosphate as a cofactor.

It carries out the reaction D-glyceraldehyde 3-phosphate + pyruvate + H(+) = 1-deoxy-D-xylulose 5-phosphate + CO2. It functions in the pathway metabolic intermediate biosynthesis; 1-deoxy-D-xylulose 5-phosphate biosynthesis; 1-deoxy-D-xylulose 5-phosphate from D-glyceraldehyde 3-phosphate and pyruvate: step 1/1. Functionally, catalyzes the acyloin condensation reaction between C atoms 2 and 3 of pyruvate and glyceraldehyde 3-phosphate to yield 1-deoxy-D-xylulose-5-phosphate (DXP). The protein is 1-deoxy-D-xylulose-5-phosphate synthase of Agrobacterium fabrum (strain C58 / ATCC 33970) (Agrobacterium tumefaciens (strain C58)).